We begin with the raw amino-acid sequence, 809 residues long: Ubiquitin carboxyl-terminal hydrolase 1 (809 aa).

Residues 101–738 (AGLVNDGNTC…GVFMLFYEYD (638 aa)) enclose the USP domain. C110 functions as the Nucleophile in the catalytic mechanism. Residues 143–195 (NEHNEEGNGQESAQDEATHKKNTRKGGKVYGKHKKKLNRKSSSKEDEEKSQEP) are disordered. A compositionally biased stretch (basic residues) spans 162-183 (KKNTRKGGKVYGKHKKKLNRKS). Residues 184–194 (SSKEDEEKSQE) show a composition bias toward basic and acidic residues. 3 positions are modified to phosphoserine: S530, S531, and S555. Positions 569 to 596 (ASHYNHTKDISNYDPLNGEVDGVTSDDE) are disordered. 2 positions are modified to phosphoserine: S618 and S638. A Phosphothreonine modification is found at T652. Phosphoserine occurs at positions 653, 654, and 670. The active-site Proton acceptor is the H697. Positions 750–809 (LEAIQSNNEEDDEKEQEQKGVQEPKESQEQGEGEEQEEGQEQMKFERTEDHRDISGKDVN) are disordered. Residue S755 is modified to Phosphoserine. The segment covering 765–777 (QEQKGVQEPKESQ) has biased composition (basic and acidic residues). Acidic residues predominate over residues 778–789 (EQGEGEEQEEGQ). Positions 790–809 (EQMKFERTEDHRDISGKDVN) are enriched in basic and acidic residues.

This sequence belongs to the peptidase C19 family.

It catalyses the reaction Thiol-dependent hydrolysis of ester, thioester, amide, peptide and isopeptide bonds formed by the C-terminal Gly of ubiquitin (a 76-residue protein attached to proteins as an intracellular targeting signal).. Its function is as follows. Has an ATP-independent isopeptidase activity, cleaving at the C-terminus of the ubiquitin moiety in natural or engineered linear fusion proteins, irrespective of their size or the presence of an N-terminal extension to ubiquitin. The sequence is that of Ubiquitin carboxyl-terminal hydrolase 1 (UBP1) from Saccharomyces cerevisiae (strain ATCC 204508 / S288c) (Baker's yeast).